A 293-amino-acid polypeptide reads, in one-letter code: Membrane protein RL13 (293 aa).

The N-terminal stretch at 1–19 is a signal peptide; the sequence is MHWHLAITWTVIILTFSEC. Residues 245–265 form a helical membrane-spanning segment; the sequence is IPLGIHAVWAGIVVSVALIAL.

It is found in the virion membrane. In terms of biological role, may play a role in modifying tropism or in modulating cell signaling during virus entry. Since RL13 expression severely impairs HCMV replication in epithelial cell cultures, it may act as a regulator promoting persistence by suppressing the switch to fully lytic infection. The polypeptide is Membrane protein RL13 (RL13) (Human cytomegalovirus (strain Merlin) (HHV-5)).